A 124-amino-acid chain; its full sequence is Fluoride-specific ion channel FluC 1 (124 aa).

4 consecutive transmembrane segments (helical) span residues 7 to 27 (IQSK…LGAI), 32 to 52 (LNNY…IVGL), 58 to 78 (IQFF…GWIL), and 93 to 113 (AGLI…TFWI). Residues glycine 68 and threonine 71 each coordinate Na(+).

This sequence belongs to the fluoride channel Fluc/FEX (TC 1.A.43) family.

The protein resides in the cell inner membrane. The enzyme catalyses fluoride(in) = fluoride(out). Na(+) is not transported, but it plays an essential structural role and its presence is essential for fluoride channel function. Functionally, fluoride-specific ion channel. Important for reducing fluoride concentration in the cell, thus reducing its toxicity. This Prochlorococcus marinus (strain SARG / CCMP1375 / SS120) protein is Fluoride-specific ion channel FluC 1.